The sequence spans 433 residues: uncharacterized protein (433 aa).

Residues 1–28 form the signal peptide; the sequence is MKICGLEKFRVFLSLISMVSLLCNGVNG. Residues 29–274 lie on the Extracellular side of the membrane; that stretch reads FTIVRSMAVN…QAELEPKKTG (246 aa). Over residues 235–250 the composition is skewed to polar residues; the sequence is GENANPTANSGTSARS. Residues 235-266 are disordered; it reads GENANPTANSGTSARSNRNEQNKMEEPARNQA. Basic and acidic residues predominate over residues 251–266; that stretch reads NRNEQNKMEEPARNQA. The chain crosses the membrane as a helical span at residues 275 to 295; the sequence is VVVAGVTVSLAAGFVLALATL. Over 296–433 the chain is Cytoplasmic; the sequence is LLMKKKQTSL…HDKGTDEDKG (138 aa). Disordered regions lie at residues 320 to 340 and 413 to 433; these read EEPVDSAGRPEQTATESPSFD and KVIEKTSNENSHDKGTDEDKG.

In terms of tissue distribution, component of the acid-insoluble and acid-soluble organic matrix of the aragonitic skeleton (at protein level).

It localises to the membrane. This is an uncharacterized protein from Acropora millepora (Staghorn coral).